The following is a 326-amino-acid chain: MDIYDDKGLQTIKLFNNEFDCIRNDIRELFKHVTDSDSIQLPMEDNSDIIENIRKILYRRLKNVECVDIDSTITFMKYDPNDDNKRTCSNWVPLTNNYMEYCLVIYLETPICGGKIKLYHPTGNIKSDKDIMFAKTLDFKSTKVLTGRKTIAVLDISVSYNRSMTTIHYNDDVDIDIHTDKNGKELCYCYITIDDHYLVDVETIGVIVNRSGKCLLVNNHLGIGIVKDKRISDSFGDVCMDTIFDFSEARELFSLTNDDNRNIAWDDDTDIWTPVTEDDYKFLSRLVLYAKSQSDTVFDYYVLTGDTEPPTVFIFKVTRFYFNMPK.

The protein belongs to the poxviridae C4/C10 protein family.

The polypeptide is Protein C10 (Homo sapiens (Human)).